A 1249-amino-acid polypeptide reads, in one-letter code: Clustered mitochondria protein homolog (1249 aa).

Residues 1–32 are disordered; it reads MAQTNGELEHSKETPEQLTNGNHPEETQEEDN. The Clu domain maps to 318–562; the sequence is DITRSQENYL…RVTPLDVMWQ (245 aa). A compositionally biased stretch (basic and acidic residues) spans 605–628; sequence KAEADAAKAESSEATESKEQASEE. 2 disordered regions span residues 605-636 and 868-903; these read KAEA…DQER and KAPA…AAKE. TPR repeat units follow at residues 974–1007, 1016–1049, and 1058–1091; these read AKLY…TERT, ILSY…WKII, and ITTM…CESL. The interval 1174–1249 is disordered; that stretch reads NMNPRSLGTK…KLRGSKKSSA (76 aa). The segment covering 1176 to 1190 has biased composition (polar residues); the sequence is NPRSLGTKIQPQVGQ.

Belongs to the CLU family. In terms of assembly, may associate with the eukaryotic translation initiation factor 3 (eIF-3) complex.

Its subcellular location is the cytoplasm. Functionally, mRNA-binding protein involved in proper cytoplasmic distribution of mitochondria. The protein is Clustered mitochondria protein homolog of Aspergillus niger (strain ATCC MYA-4892 / CBS 513.88 / FGSC A1513).